Here is a 98-residue protein sequence, read N- to C-terminus: NADH-ubiquinone oxidoreductase chain 4L (98 aa).

The next 3 helical transmembrane spans lie at 1–21 (MSLI…GLLM), 29–49 (ALLC…LTIL), and 61–81 (IILL…LVMI).

The protein belongs to the complex I subunit 4L family. As to quaternary structure, core subunit of respiratory chain NADH dehydrogenase (Complex I) which is composed of 45 different subunits.

Its subcellular location is the mitochondrion inner membrane. It catalyses the reaction a ubiquinone + NADH + 5 H(+)(in) = a ubiquinol + NAD(+) + 4 H(+)(out). Functionally, core subunit of the mitochondrial membrane respiratory chain NADH dehydrogenase (Complex I) which catalyzes electron transfer from NADH through the respiratory chain, using ubiquinone as an electron acceptor. Part of the enzyme membrane arm which is embedded in the lipid bilayer and involved in proton translocation. This Platanista minor (Indus river dolphin) protein is NADH-ubiquinone oxidoreductase chain 4L (MT-ND4L).